Here is a 108-residue protein sequence, read N- to C-terminus: Small ribosomal subunit protein mS33 (108 aa).

The tract at residues 84-108 is disordered; the sequence is LRARDKGAPKKKRTAPSAADAKKKK.

The protein belongs to the mitochondrion-specific ribosomal protein mS33 family. Component of the mitochondrial small ribosomal subunit (mt-SSU). Mature N.crassa 74S mitochondrial ribosomes consist of a small (37S) and a large (54S) subunit. The 37S small subunit contains a 16S ribosomal RNA (16S mt-rRNA) and 32 different proteins. The 54S large subunit contains a 23S rRNA (23S mt-rRNA) and 42 different proteins.

The protein localises to the mitochondrion. Functionally, component of the mitochondrial ribosome (mitoribosome), a dedicated translation machinery responsible for the synthesis of mitochondrial genome-encoded proteins, including at least some of the essential transmembrane subunits of the mitochondrial respiratory chain. The mitoribosomes are attached to the mitochondrial inner membrane and translation products are cotranslationally integrated into the membrane. The polypeptide is Small ribosomal subunit protein mS33 (rsm27) (Neurospora crassa (strain ATCC 24698 / 74-OR23-1A / CBS 708.71 / DSM 1257 / FGSC 987)).